Reading from the N-terminus, the 334-residue chain is N-acetyl-gamma-glutamyl-phosphate reductase (334 aa).

C154 is an active-site residue.

This sequence belongs to the NAGSA dehydrogenase family. Type 1 subfamily.

It is found in the cytoplasm. It carries out the reaction N-acetyl-L-glutamate 5-semialdehyde + phosphate + NADP(+) = N-acetyl-L-glutamyl 5-phosphate + NADPH + H(+). It participates in amino-acid biosynthesis; L-arginine biosynthesis; N(2)-acetyl-L-ornithine from L-glutamate: step 3/4. Its function is as follows. Catalyzes the NADPH-dependent reduction of N-acetyl-5-glutamyl phosphate to yield N-acetyl-L-glutamate 5-semialdehyde. This chain is N-acetyl-gamma-glutamyl-phosphate reductase, found in Vibrio parahaemolyticus serotype O3:K6 (strain RIMD 2210633).